The chain runs to 229 residues: MLICVPGILSKDDVAEFRHIMAESDWEDGRSTAGAQSAMVKRNEQLPPDSEVARRLGHRIISAMTANPRFLAAAIPQQIFPPLFNRYAADAGHQFGIHVDNAVRGDKLTGLRIRTDLSVTLFLSEPDEYDGGELVIEDLYGSHEVKLPAGDLVLYPASSLHMVTPVTRGVRVASFFWLQSMIRDPLARSMIFDLDTTIQGLSQRMGRDDPEMVRLTGLYHNLIRYWAET.

The 103-residue stretch at 78–180 folds into the Fe2OG dioxygenase domain; it reads QIFPPLFNRY…RVASFFWLQS (103 aa). Residues H98, D100, and H161 each contribute to the Fe cation site. R171 contacts 2-oxoglutarate.

It depends on Fe(2+) as a cofactor. Requires L-ascorbate as cofactor.

This Bradyrhizobium sp. (strain ORS 278) protein is PKHD-type hydroxylase BRADO6316.